We begin with the raw amino-acid sequence, 435 residues long: Gamma-glutamyl phosphate reductase (435 aa).

The protein belongs to the gamma-glutamyl phosphate reductase family.

The protein resides in the cytoplasm. It catalyses the reaction L-glutamate 5-semialdehyde + phosphate + NADP(+) = L-glutamyl 5-phosphate + NADPH + H(+). Its pathway is amino-acid biosynthesis; L-proline biosynthesis; L-glutamate 5-semialdehyde from L-glutamate: step 2/2. Functionally, catalyzes the NADPH-dependent reduction of L-glutamate 5-phosphate into L-glutamate 5-semialdehyde and phosphate. The product spontaneously undergoes cyclization to form 1-pyrroline-5-carboxylate. The protein is Gamma-glutamyl phosphate reductase of Aquifex aeolicus (strain VF5).